A 338-amino-acid polypeptide reads, in one-letter code: Glycerol-3-phosphate dehydrogenase [NAD(P)+] (338 aa).

Residues S11, W12, H32, H33, and K109 each coordinate NADPH. Residues K109, G140, and S142 each contribute to the sn-glycerol 3-phosphate site. Residue A144 coordinates NADPH. Sn-glycerol 3-phosphate is bound by residues K195, D248, S258, R259, and N260. Catalysis depends on K195, which acts as the Proton acceptor. R259 is an NADPH binding site. Positions 283 and 285 each coordinate NADPH.

It belongs to the NAD-dependent glycerol-3-phosphate dehydrogenase family.

The protein localises to the cytoplasm. The catalysed reaction is sn-glycerol 3-phosphate + NAD(+) = dihydroxyacetone phosphate + NADH + H(+). It carries out the reaction sn-glycerol 3-phosphate + NADP(+) = dihydroxyacetone phosphate + NADPH + H(+). The protein operates within membrane lipid metabolism; glycerophospholipid metabolism. In terms of biological role, catalyzes the reduction of the glycolytic intermediate dihydroxyacetone phosphate (DHAP) to sn-glycerol 3-phosphate (G3P), the key precursor for phospholipid synthesis. This Leuconostoc citreum (strain KM20) protein is Glycerol-3-phosphate dehydrogenase [NAD(P)+].